A 433-amino-acid chain; its full sequence is Pyroglutamylated RF-amide peptide receptor (433 aa).

Topologically, residues 1–46 are extracellular; it reads MQALNITAEQFSRLLSAHNLTREQFIHRYGLRPLVYTPELPARAKL. Residues Asn5 and Asn19 are each glycosylated (N-linked (GlcNAc...) asparagine). Residues 47–67 form a helical membrane-spanning segment; sequence AFALAGALIFALALFGNSLVI. Topologically, residues 68–81 are cytoplasmic; sequence YVVTRSKAMRTVTN. The chain crosses the membrane as a helical span at residues 82–102; that stretch reads IFICSLALSDLLIAFFCIPVT. At 103-120 the chain is on the extracellular side; it reads MLQNISDKWLGGAFICKM. The helical transmembrane segment at 121 to 141 threads the bilayer; the sequence is VPFVQSTAVVTEILTMTCIAV. The Cytoplasmic segment spans residues 142-162; sequence ERHQGLIHPFKMKWQYTTRRA. The helical transmembrane segment at 163-183 threads the bilayer; sequence FTILGVVWLAAIIVGSPMWHV. Over 184–212 the chain is Extracellular; that stretch reads QRLEIKYDFLYEKEHVCCLEEWASPMHQR. Residues 213-233 form a helical membrane-spanning segment; that stretch reads IYTTFILVILFLLPLVVMLVL. Topologically, residues 234-271 are cytoplasmic; it reads YSKIGYELWIKKRVGDSSALQTIHGKEMSKIARKKKRA. The chain crosses the membrane as a helical span at residues 272–292; that stretch reads VVMMVTVVALFAACWAPFHVV. Over 293–313 the chain is Extracellular; the sequence is HMMVEYSNFEKEYDDVTIKMV. The chain crosses the membrane as a helical span at residues 314–334; it reads FAVAQTIGFFNSICNPFVYAF. The Cytoplasmic segment spans residues 335 to 433; sequence MNENFKKNFL…NSTFGSGHEL (99 aa).

Belongs to the G-protein coupled receptor 1 family. As to expression, expressed widely in the brain with high levels in the cortex and hypothalamus, and moderate levels in the brain stem, caudate nucleus, midbrain hippocampus, thalamus, trigeminal ganglia and spinal cord. Particularly strong expression detected in the mitral cell layer of the olfactory bulb, accessory olfactory bulb, island of Calleja and nucleus of the solitary tract. In peripheral tissues, expressed at moderate levels in the eye, liver, kidney, pituitary gland, testis and thymus.

Its subcellular location is the cell membrane. Receptor for the orexigenic neuropeptide QRFP. The activity of this receptor is mediated by G proteins that modulate adenylate cyclase activity and intracellular calcium levels. This Mus musculus (Mouse) protein is Pyroglutamylated RF-amide peptide receptor (Qrfpr).